Here is a 476-residue protein sequence, read N- to C-terminus: Nyctalopin (476 aa).

An N-terminal signal peptide occupies residues 1–18; that stretch reads MLVLLLHAVVLGLPSAWA. 11 LRR repeats span residues 60–84, 85–108, 110–133, 134–157, 159–181, 182–204, 205–228, 229–252, 254–276, 277–300, and 302–324; these read VSID…PSLR, RLSL…PRLA, LRLA…SRLR, RLDL…PALR, LAAF…NLTH, AHLE…RRLR, SLSL…GVLE, HLLL…RRLR, LNLG…AELE, LLYL…SGLL, and LHLN…FFLG. A glycan (N-linked (GlcNAc...) asparagine) is linked at N92. A glycan (N-linked (GlcNAc...) asparagine) is linked at N178. N295 is a glycosylation site (N-linked (GlcNAc...) asparagine). Residues 336–387 enclose the LRRCT domain; sequence DCRLEWLRDWMEGSGRVTDVPCASPGSVAGLDLSQVTFGRSSDGLCVDPEEL. 3 N-linked (GlcNAc...) asparagine glycosylation sites follow: N388, N427, and N434.

This sequence belongs to the small leucine-rich proteoglycan (SLRP) family. SLRP class IV subfamily. As to expression, expressed in kidney and retina. Also at low levels in brain, testis and muscle. Within the retina, expressed in the inner segment of photoreceptors, outer and inner nuclear layers and the ganglion cell layer.

The protein resides in the secreted. It localises to the extracellular space. The protein localises to the extracellular matrix. The protein is Nyctalopin (NYX) of Homo sapiens (Human).